A 300-amino-acid chain; its full sequence is Acetaldehyde dehydrogenase (300 aa).

An NAD(+)-binding site is contributed by Ser-11–Ile-14. Cys-129 acts as the Acyl-thioester intermediate in catalysis. NAD(+) is bound by residues Ser-160–Asn-168 and Asn-271.

The protein belongs to the acetaldehyde dehydrogenase family.

It catalyses the reaction acetaldehyde + NAD(+) + CoA = acetyl-CoA + NADH + H(+). The chain is Acetaldehyde dehydrogenase (mhpF) from Pseudoalteromonas translucida (strain TAC 125).